We begin with the raw amino-acid sequence, 242 residues long: Triosephosphate isomerase (242 aa).

8–10 (NWK) is a substrate binding site. H91 serves as the catalytic Electrophile. The active-site Proton acceptor is the E155. G161 and S192 together coordinate substrate.

This sequence belongs to the triosephosphate isomerase family. In terms of assembly, homodimer.

Its subcellular location is the cytoplasm. The catalysed reaction is D-glyceraldehyde 3-phosphate = dihydroxyacetone phosphate. It functions in the pathway carbohydrate biosynthesis; gluconeogenesis. The protein operates within carbohydrate degradation; glycolysis; D-glyceraldehyde 3-phosphate from glycerone phosphate: step 1/1. Its function is as follows. Involved in the gluconeogenesis. Catalyzes stereospecifically the conversion of dihydroxyacetone phosphate (DHAP) to D-glyceraldehyde-3-phosphate (G3P). This chain is Triosephosphate isomerase, found in Wolbachia pipientis wMel.